The chain runs to 486 residues: Transcription factor VOZ1 (486 aa).

Residues 208–405 are VOZ; sequence PPSAFLGPKC…VDGKKTSKGK (198 aa). Residues C217, C222, C236, and H240 each coordinate Zn(2+). The C3H1-type; atypical zinc finger occupies 217–240; the sequence is CALWDCPRPAQGFDWFQDYCSSFH. A disordered region spans residues 424-445; the sequence is EFPPENNTTNTTNNNKRCIKGR. Positions 429–438 are enriched in low complexity; sequence NNTTNTTNNN.

As to quaternary structure, homodimer. Interacts with phytochrome B (phyB). Ubiquitous. Expressed in the vascular bundles of various tissues, specifically in the phloem.

It localises to the cytoplasm. Its subcellular location is the nucleus. Transcriptional activator acting positively in the phytochrome B signaling pathway. Functions redundantly with VOZ2 to promote flowering downstream of phytochrome B (phyB). Down-regulates 'FLOWERING LOCUS C' (FLC) and up-regulates 'FLOWERING LOCUS T' (FT). Binds to the 38-bp cis-acting region of the AVP1 gene. Interacts with phyB in the cytoplasm and is translocated to the nucleus at signal transmission, where it is subjected to degradation in a phytochrome-dependent manner. The chain is Transcription factor VOZ1 (VOZ1) from Arabidopsis thaliana (Mouse-ear cress).